Consider the following 696-residue polypeptide: Protein OS-9 homolog (696 aa).

An N-terminal signal peptide occupies residues 1 to 15 (MLVVAFASLLGAARA). N35, N46, and N68 each carry an N-linked (GlcNAc...) asparagine glycan. The 119-residue stretch at 106–224 (NQCLVSQNGF…QVIVPDLCQL (119 aa)) folds into the MRH domain. An intrachain disulfide couples C108 to C121. 6 residues coordinate a mannooligosaccharide derivative: W116, Q128, D178, R184, E206, and Y212. 2 disulfides stabilise this stretch: C177-C210 and C192-C222. N-linked (GlcNAc...) asparagine glycans are attached at residues N276, N290, and N372. 2 disordered regions span residues 450–600 (IEAS…DNSD) and 667–696 (TLGN…DDEL). The span at 458-467 (TKASESTPVS) shows a compositional bias: polar residues. Positions 482 to 498 (RSRDKEEYFKENEKQGE) are enriched in basic and acidic residues. 3 stretches are compositionally biased toward polar residues: residues 499-518 (ENNA…GTIS), 528-553 (NQKQ…SAND), and 585-597 (NIDN…TLND). An N-linked (GlcNAc...) asparagine glycan is attached at N588. Basic and acidic residues predominate over residues 685–696 (ESDRNGVIDDEL).

The protein belongs to the OS-9 family. As to quaternary structure, interacts with missfolded ER lumenal proteins.

The protein resides in the endoplasmic reticulum membrane. In terms of biological role, lectin involved in the quality control of the secretory pathway. As a member of the endoplasmic reticulum-associated degradation lumenal (ERAD-L) surveillance system, targets misfolded endoplasmic reticulum lumenal glycoproteins for degradation. The sequence is that of Protein OS-9 homolog (YOS9) from Candida glabrata (strain ATCC 2001 / BCRC 20586 / JCM 3761 / NBRC 0622 / NRRL Y-65 / CBS 138) (Yeast).